Here is a 230-residue protein sequence, read N- to C-terminus: RNA chaperone ProQ (230 aa).

A compositionally biased stretch (basic and acidic residues) spans 105 to 125; sequence EAKARVQAQREQHQAKKREAG. The interval 105-182 is disordered; the sequence is EAKARVQAQR…EQRKPVTDTT (78 aa). Positions 154 to 167 are enriched in low complexity; it reads PSRPQAARPASAPR. Residues 168–178 are compositionally biased toward basic and acidic residues; it reads AESRVEQRKPV.

The protein belongs to the ProQ family.

Its subcellular location is the cytoplasm. In terms of biological role, RNA chaperone with significant RNA binding, RNA strand exchange and RNA duplexing activities. May regulate ProP activity through an RNA-based, post-transcriptional mechanism. This chain is RNA chaperone ProQ, found in Erwinia tasmaniensis (strain DSM 17950 / CFBP 7177 / CIP 109463 / NCPPB 4357 / Et1/99).